The sequence spans 561 residues: Nucleoprotein (561 aa).

A binding site for the cap structure m7GTP region spans residues 52–237; that stretch reads VRKDKRTDSD…ISHEPSALNI (186 aa). The tract at residues 336–355 is disordered; that stretch reads SKPSAIQPPVRNGGSPDLKQ. Aspartate 380 and glutamate 382 together coordinate Mn(2+). 4 residues coordinate Zn(2+): glutamate 390, cysteine 497, histidine 500, and cysteine 521. A Mn(2+)-binding site is contributed by aspartate 525.

This sequence belongs to the arenaviridae nucleocapsid protein family. In terms of assembly, homomultimerizes to form the nucleocapsid. Binds to viral genomic RNA. Interacts with glycoprotein G2. Interacts with protein Z; this interaction probably directs the encapsidated genome to budding sites. Interacts with protein L; this interaction does not interfere with Z-L interaction. Interacts with host IKBKE (via Protein kinase domain); the interaction inhibits IKBKE kinase activity.

It localises to the virion. Its subcellular location is the host cytoplasm. Functionally, encapsidates the genome, protecting it from nucleases. The encapsidated genomic RNA is termed the nucleocapsid (NC). Serves as template for viral transcription and replication. The increased presence of protein N in host cell does not seem to trigger the switch from transcription to replication as observed in other negative strain RNA viruses. Through the interaction with host IKBKE, strongly inhibits the phosphorylation and nuclear translocation of host IRF3, a protein involved in interferon activation pathway, leading to the inhibition of interferon-beta and IRF3-dependent promoters activation. Also encodes a functional 3'-5' exoribonuclease that degrades preferentially dsRNA substrates and thereby participates in the suppression of interferon induction. The chain is Nucleoprotein from Cavia cutleri (Guinea pig).